The sequence spans 357 residues: uncharacterized protein (357 aa).

A disordered region spans residues 120–145; that stretch reads SSSTVNHDQPAEQPSDKSTDDSTGYP.

This is an uncharacterized protein from Caenorhabditis elegans.